The sequence spans 932 residues: Glycine dehydrogenase (decarboxylating) (932 aa).

An N6-(pyridoxal phosphate)lysine modification is found at K685.

It belongs to the GcvP family. As to quaternary structure, the glycine cleavage system is composed of four proteins: P, T, L and H. Pyridoxal 5'-phosphate serves as cofactor.

The catalysed reaction is N(6)-[(R)-lipoyl]-L-lysyl-[glycine-cleavage complex H protein] + glycine + H(+) = N(6)-[(R)-S(8)-aminomethyldihydrolipoyl]-L-lysyl-[glycine-cleavage complex H protein] + CO2. The glycine cleavage system catalyzes the degradation of glycine. The P protein binds the alpha-amino group of glycine through its pyridoxal phosphate cofactor; CO(2) is released and the remaining methylamine moiety is then transferred to the lipoamide cofactor of the H protein. This is Glycine dehydrogenase (decarboxylating) from Brucella melitensis biotype 2 (strain ATCC 23457).